We begin with the raw amino-acid sequence, 383 residues long: LIM/homeobox protein Lhx3 (383 aa).

LIM zinc-binding domains lie at 14–73 and 73–136; these read PLCA…RFGT and TKCA…AKQR. The residue at position 48 (threonine 48) is a Phosphothreonine. Serine 56 is modified (phosphoserine). The homeobox DNA-binding region spans 142–201; it reads AKRPRTTITAKQLETLKSAYNTSPKPARHVREQLSSETGLDMRVVQVWFQNRRAKEKRLK. Residues 197 to 383 form a disordered region; the sequence is EKRLKKDAGR…WLDEVDHAQF (187 aa). At tyrosine 212 the chain carries Phosphotyrosine. At serine 223 the chain carries Phosphoserine. The span at 307-334 shows a compositional bias: low complexity; that stretch reads PAALQSLPGPQPLLSSLVYPEAGLGLVP. Pro residues predominate over residues 335 to 344; it reads AGPPGGPPPM.

In terms of assembly, interacts with POU1F1. At neuronal promoters, interacts with LDB1, in motor neurons LDB1 is displaced by ISL1 and a ternary complex is formed in which ISL1 contacts both LHX3 and LDB1; allosteric structural changes in the DNA binding domain of LHX3, induced by the ISL1-LHX3 interaction, may explain differences in sequence specificity of the different complexes. Interacts with LDB2. May interact with CITED2/MRG1.

The protein resides in the nucleus. Transcription factor. Recognizes and binds to the consensus sequence motif 5'-AATTAATTA-3' in the regulatory elements of target genes, such as glycoprotein hormones alpha chain CGA and visual system homeobox CHX10, positively modulating transcription; transcription can be co-activated by LDB2. Synergistically enhances transcription from the prolactin promoter in cooperation with POU1F1/Pit-1. Required for the establishment of the specialized cells of the pituitary gland and the nervous system. Involved in the development of interneurons and motor neurons in cooperation with LDB1 and ISL1. The polypeptide is LIM/homeobox protein Lhx3 (LHX3) (Sus scrofa (Pig)).